The chain runs to 284 residues: Bifunctional protein FolD (284 aa).

Residues Gly166 to Ser168 and Ile232 each bind NADP(+).

Belongs to the tetrahydrofolate dehydrogenase/cyclohydrolase family. In terms of assembly, homodimer.

The catalysed reaction is (6R)-5,10-methylene-5,6,7,8-tetrahydrofolate + NADP(+) = (6R)-5,10-methenyltetrahydrofolate + NADPH. It carries out the reaction (6R)-5,10-methenyltetrahydrofolate + H2O = (6R)-10-formyltetrahydrofolate + H(+). It participates in one-carbon metabolism; tetrahydrofolate interconversion. In terms of biological role, catalyzes the oxidation of 5,10-methylenetetrahydrofolate to 5,10-methenyltetrahydrofolate and then the hydrolysis of 5,10-methenyltetrahydrofolate to 10-formyltetrahydrofolate. The sequence is that of Bifunctional protein FolD from Pseudomonas paraeruginosa (strain DSM 24068 / PA7) (Pseudomonas aeruginosa (strain PA7)).